The following is a 272-amino-acid chain: 2-dehydro-3-deoxyphosphooctonate aldolase (272 aa).

Belongs to the KdsA family.

Its subcellular location is the cytoplasm. It catalyses the reaction D-arabinose 5-phosphate + phosphoenolpyruvate + H2O = 3-deoxy-alpha-D-manno-2-octulosonate-8-phosphate + phosphate. The protein operates within carbohydrate biosynthesis; 3-deoxy-D-manno-octulosonate biosynthesis; 3-deoxy-D-manno-octulosonate from D-ribulose 5-phosphate: step 2/3. It participates in bacterial outer membrane biogenesis; lipopolysaccharide biosynthesis. In Geotalea daltonii (strain DSM 22248 / JCM 15807 / FRC-32) (Geobacter daltonii), this protein is 2-dehydro-3-deoxyphosphooctonate aldolase.